We begin with the raw amino-acid sequence, 81 residues long: Elicitor peptide 4 (81 aa).

A propeptide spanning residues 1 to 54 is cleaved from the precursor; sequence MERGVSYYLWIPFKFIHQTFGSLLLKLLGLRSPSDHSFPEDGEEEVKVVEVSSR. The interval 57–81 is disordered; sequence PGKKNVLKKSRESSGKPGGTNKKPF.

The protein belongs to the brassicaceae elicitor peptide family.

Its function is as follows. Elicitor of plant defense. This is Elicitor peptide 4 (PEP4) from Arabidopsis thaliana (Mouse-ear cress).